Here is a 288-residue protein sequence, read N- to C-terminus: Ribosome biogenesis GTPase A (288 aa).

Residues 14–179 (RRQVTEKLKL…LLDTPGILWP (166 aa)) enclose the CP-type G domain. GTP is bound by residues 58–61 (NKVD), 131–136 (NVGKST), and Gly-175.

It belongs to the TRAFAC class YlqF/YawG GTPase family. MTG1 subfamily. As to quaternary structure, interacts with ctc. Interacts with the immature 50S ribosome subunit. 2 molecules of rbgA bind to one 50S subunit.

The protein resides in the cytoplasm. Functionally, essential protein that is required for a late step of 50S ribosomal subunit assembly. Has GTPase activity that is stimulated by interaction with the immature 50S ribosome subunit. Binds to the 23S rRNA. Required for the association of ribosomal proteins rplP and rpmA with the large subunit. This is Ribosome biogenesis GTPase A from Priestia megaterium (strain DSM 319 / IMG 1521) (Bacillus megaterium).